We begin with the raw amino-acid sequence, 1391 residues long: CAP-Gly domain-containing linker protein 1 (1391 aa).

The interval 1 to 53 is disordered; that stretch reads MSMLKPSGLKAPTKILKPGSTALKTPAAAAAPVEKTIPSEKASGPPSSETQEE. Ser48 bears the Phosphoserine mark. Thr50 carries the phosphothreonine modification. One can recognise a CAP-Gly 1 domain in the interval 78–120; that stretch reads GETQFAPGQWAGIVLDEPIGKNDGSVAGVRYFQCEPLKGIFTR. An important for tubulin binding region spans residues 97–101; sequence GKNDG. Positions 129-182 are disordered; the sequence is QAEDEANGLQAAPGRTASPLSTAAATMVSSSPATPSNIPHKPSQSTAKEPSATP. A Phosphoserine modification is found at Ser146. Residues 146–182 show a composition bias toward polar residues; it reads SPLSTAAATMVSSSPATPSNIPHKPSQSTAKEPSATP. A Phosphothreonine modification is found at Thr181. A phosphoserine mark is found at Ser194, Ser196, Ser199, and Ser203. Residues 231–273 form the CAP-Gly 2 domain; that stretch reads GETDFAKGEWCGVELDEPLGKNDGAVAGTRYFQCQPKYGLFAP. Low complexity predominate over residues 302 to 331; it reads TPASLKRSPSASSLSSMSSVASSVSSKPSR. The interval 302-336 is disordered; sequence TPASLKRSPSASSLSSMSSVASSVSSKPSRTGLLT. Ser309 is modified (phosphoserine). Phosphoserine; by PKA is present on Ser311. 3 positions are modified to phosphoserine: Ser314, Ser347, and Ser1189. Positions 349 to 1306 form a coiled coil; it reads TTALQEALKE…VEMMSEAALN (958 aa). The segment at 1251-1272 is disordered; it reads KRQLSSSSGNTDAQAEEDERAQ. Ser1317 carries the post-translational modification Phosphoserine. A CCHC-type zinc finger spans residues 1370–1387; it reads PYCEICEMFGHWATNCND.

As to quaternary structure, interacts with MTOR; phosphorylates and regulates CLIP1. Interacts (via CAP-Gly domains) with tubulin. Interacts with SLAIN2. Interacts with TUBA1B, MAPRE1 and MAPRE3. Interacts (via zinc finger) with DCTN1. Binds preferentially to tyrosinated microtubules, and only marginally to detyrosinated microtubules. Post-translationally, phosphorylated. Phosphorylation induces conformational changes by increasing the affinity of the N-terminus for C-terminus, resulting in inhibition of its function thus decreasing its binding to microtubules and DCTN1. Exhibits a folded, autoinhibited conformation when phosphorylated and an open conformation when dephosphorylated with increased binding affinity to microtubules and DCTN1. Phosphorylation regulates its recruitment to tyrosinated microtubules and the recruitment of vesicular cargo to microtubules in neurons. Phosphorylation by MTOR may positively regulate CLIP1 association with microtubules. Expressed in the testes (at protein level).

The protein localises to the cytoplasm. It is found in the cytoskeleton. Its subcellular location is the cytoplasmic vesicle membrane. It localises to the cell projection. The protein resides in the ruffle. Its function is as follows. Binds to the plus end of microtubules and regulates the dynamics of the microtubule cytoskeleton. Promotes microtubule growth and microtubule bundling. Links cytoplasmic vesicles to microtubules and thereby plays an important role in intracellular vesicle trafficking. Plays a role macropinocytosis and endosome trafficking. In Mus musculus (Mouse), this protein is CAP-Gly domain-containing linker protein 1 (Clip1).